An 838-amino-acid chain; its full sequence is Protein translocase subunit SecA (838 aa).

ATP-binding positions include Gln-86, 104-108, and Asp-493; that span reads GEGKT. Disordered regions lie at residues 517-536 and 789-838; these read RRIDNQLRGRSGRQGDPGSS and KVAE…CCGQ. Over residues 801–819 the composition is skewed to basic and acidic residues; that stretch reads TDGDSKAKRQPVRKKETVG. Positions 824, 826, 835, and 836 each coordinate Zn(2+).

It belongs to the SecA family. Monomer and homodimer. Part of the essential Sec protein translocation apparatus which comprises SecA, SecYEG and auxiliary proteins SecDF. Other proteins may also be involved. The cofactor is Zn(2+).

The protein localises to the cell membrane. It is found in the cytoplasm. It carries out the reaction ATP + H2O + cellular proteinSide 1 = ADP + phosphate + cellular proteinSide 2.. Part of the Sec protein translocase complex. Interacts with the SecYEG preprotein conducting channel. Has a central role in coupling the hydrolysis of ATP to the transfer of proteins into and across the cell membrane, serving as an ATP-driven molecular motor driving the stepwise translocation of polypeptide chains across the membrane. The protein is Protein translocase subunit SecA of Halalkalibacterium halodurans (strain ATCC BAA-125 / DSM 18197 / FERM 7344 / JCM 9153 / C-125) (Bacillus halodurans).